The sequence spans 77 residues: Small integral membrane protein 5 (77 aa).

A helical transmembrane segment spans residues 32–52; that stretch reads IVAFSVIILFTATVLLLLLIA.

The protein resides in the membrane. The sequence is that of Small integral membrane protein 5 (SMIM5) from Homo sapiens (Human).